The following is a 35-amino-acid chain: Photosystem II reaction center protein Psb30 (35 aa).

The chain crosses the membrane as a helical span at residues 7 to 27 (LIANFAALALITLAGPAVIFI).

This sequence belongs to the Psb30/Ycf12 family. PSII is composed of 1 copy each of membrane proteins PsbA, PsbB, PsbC, PsbD, PsbE, PsbF, PsbH, PsbI, PsbJ, PsbK, PsbL, PsbM, PsbT, PsbX, PsbY, PsbZ, Psb30/Ycf12, peripheral proteins of the oxygen-evolving complex and a large number of cofactors. It forms dimeric complexes.

The protein resides in the plastid. The protein localises to the organellar chromatophore thylakoid membrane. Functionally, a core subunit of photosystem II (PSII), probably helps stabilize the reaction center. The sequence is that of Photosystem II reaction center protein Psb30 from Paulinella chromatophora.